Here is a 312-residue protein sequence, read N- to C-terminus: Bifunctional pinoresinol-lariciresinol reductase (312 aa).

Residues 10-16, R35, and K44 each bind NADP(+); that span reads GGTGYLG. The Proton acceptor role is filled by K139. R143 contributes to the NADP(+) binding site. A substrate-binding site is contributed by H271.

It belongs to the NmrA-type oxidoreductase family. Isoflavone reductase subfamily. Dimer. In terms of tissue distribution, expressed in young stems, young roots and petioles. In stems, expressed in radial parenchyma cells and in the cambial cells of developing secondary xylem.

The enzyme catalyses (+)-lariciresinol + NADP(+) = (+)-pinoresinol + NADPH + H(+). It carries out the reaction (-)-secoisolariciresinol + NADP(+) = (+)-lariciresinol + NADPH + H(+). In terms of biological role, reductase involved in lignan biosynthesis. Catalyzes the enantioselective sequential conversion of (+)-pinoresinol into (+)-lariciresinol and of (+)-lariciresinol into (-)-secoisolariciresinol. Abstracts the 4R-hydride from the NADPH cofactor during catalysis. This is Bifunctional pinoresinol-lariciresinol reductase (PLR_Fi1) from Forsythia intermedia (Border forsythia).